The sequence spans 1603 residues: Transcription factor Gibbin (1603 aa).

Disordered stretches follow at residues 19–108, 150–236, 264–285, and 394–467; these read PDYL…SSSR, LRLS…STDY, LEPP…FLDP, and CRRR…RKGK. A compositionally biased stretch (pro residues) spans 30–47; the sequence is GGPPTPRPLLPTRPPASP. N6-acetyllysine is present on lysine 79. The span at 166-178 shows a compositional bias: polar residues; it reads SFFSSPSLANSIR. The segment covering 179–194 has biased composition (basic and acidic residues); sequence SPEERATPHAKSERPS. Low complexity predominate over residues 216-225; that stretch reads PGATAAATGL. Phosphoserine is present on serine 268. Positions 273-285 are enriched in low complexity; that stretch reads PQLLDPQPRFLDP. Positions 396–408 form a DNA-binding region, a.T hook 1; the sequence is RRKAGRGRKADAG. Pro residues predominate over residues 428-446; it reads EPPPPPPPPPPALPGPGPV. Positions 544-556 form a DNA-binding region, a.T hook 2; that stretch reads KRKRGRPPKNLLL. A disordered region spans residues 581-607; sequence MPEVKKRRRRKQKLASPQPSYAADAND. Serine 596 carries the phosphoserine modification. Lysine 609 is covalently cross-linked (Glycyl lysine isopeptide (Lys-Gly) (interchain with G-Cter in SUMO2)). Disordered stretches follow at residues 717-792 and 806-827; these read LTEL…RNCG and LESG…GQTE. Over residues 737–746 the composition is skewed to basic residues; the sequence is KPKRKRRSRK. Polar residues predominate over residues 816–827; that stretch reads YYSTGAPSGQTE. 2 positions are modified to phosphoserine: serine 829 and serine 846. At arginine 891 the chain carries Omega-N-methylarginine. 2 positions are modified to phosphoserine: serine 896 and serine 1064. Disordered regions lie at residues 1159–1198 and 1253–1286; these read VSET…QSSL and ASAA…KKER. Composition is skewed to low complexity over residues 1160 to 1171 and 1187 to 1198; these read SETFSESSSDST and SEASSSEGQSSL. Serine 1187 carries the post-translational modification Phosphoserine. Residues serine 1322, serine 1324, and serine 1399 each carry the phosphoserine modification. Threonine 1401 bears the Phosphothreonine mark. At serine 1403 the chain carries Phosphoserine. Lysine 1409 participates in a covalent cross-link: Glycyl lysine isopeptide (Lys-Gly) (interchain with G-Cter in SUMO2). The disordered stretch occupies residues 1503–1533; it reads PHLASPPATPKADKEPLEMARPPGPPRGPAA. Phosphoserine occurs at positions 1507 and 1549.

The protein localises to the nucleus. Its subcellular location is the chromosome. Functionally, transcription factor required for the proper patterning of the epidermis, which plays a key role in early epithelial morphogenesis. Directly binds promoter and enhancer regions and acts by maintaining local enhancer-promoter chromatin architecture. Interacts with many sequence-specific zinc-finger transcription factors and methyl-CpG-binding proteins to regulate the expression of mesoderm genes that wire surface ectoderm stratification. This is Transcription factor Gibbin from Homo sapiens (Human).